The chain runs to 287 residues: MVLIIDRLYEEVNKKGNVCVGLDTDLSYIPQRFLKNYENIEDAIFQFNRKIIDATHDAVACYKVQIAYYESFGLKGLMAYKRTLEYIKKVGCIAISDVKRGDISKTAEMYAKAHFEGDFETDFITVNPYMGMDSIEPYMPYLQNKEKGLFALVRTSNPGSKDFEYIQSGSGRRVYEIVGEKLERLGEKVMGQCGYSSIGGVVGCTTLEDGKEIRKNFGKTFFLIPGFGAQGGGAKEANVYLKDGNGGVVNSSRGILLAYKKYENGEKNFDECSRKEVLKMQKELGRE.

Lys99 functions as the Proton donor in the catalytic mechanism.

Belongs to the OMP decarboxylase family. Type 2 subfamily.

It catalyses the reaction orotidine 5'-phosphate + H(+) = UMP + CO2. Its pathway is pyrimidine metabolism; UMP biosynthesis via de novo pathway; UMP from orotate: step 2/2. The chain is Orotidine 5'-phosphate decarboxylase from Clostridium novyi (strain NT).